The primary structure comprises 158 residues: MSLIPSFFGGRRSNVFDPFSLDVWDPFKDFPFNNSALSASFPRENSAFVSTRVDWKETPEAHVFKADLPGMKKEEVKVEIEDDRVLQISGERSVEKEDKNDQWHRLERSSGKFMRRFRLPENAKMDQVKAAMENGVLTVTVPKEEVKKPEVKTIDISG.

In terms of domain architecture, sHSP spans 44-158 (ENSAFVSTRV…PEVKTIDISG (115 aa)).

It belongs to the small heat shock protein (HSP20) family. As to quaternary structure, forms oligomeric structures.

The protein resides in the cytoplasm. This chain is 18.2 kDa class I heat shock protein (HSP18.2), found in Medicago sativa (Alfalfa).